The sequence spans 317 residues: L-lactate dehydrogenase (317 aa).

Residues V17, D38, K43, Y69, and 83-84 (GA) contribute to the NAD(+) site. 2 residues coordinate substrate: Q86 and R92. NAD(+) is bound by residues S105, 122–124 (ATN), and S147. A substrate-binding site is contributed by 124–127 (NPVD). Substrate is bound at residue 152–155 (DTAR). Positions 157 and 172 each coordinate beta-D-fructose 1,6-bisphosphate. H179 (proton acceptor) is an active-site residue. Y224 carries the phosphotyrosine modification. Residue T233 coordinates substrate.

Belongs to the LDH/MDH superfamily. LDH family. Homotetramer.

The protein localises to the cytoplasm. It carries out the reaction (S)-lactate + NAD(+) = pyruvate + NADH + H(+). Its pathway is fermentation; pyruvate fermentation to lactate; (S)-lactate from pyruvate: step 1/1. With respect to regulation, allosterically activated by fructose 1,6-bisphosphate (FBP). Catalyzes the conversion of lactate to pyruvate. The protein is L-lactate dehydrogenase of Bacillus caldotenax.